The following is a 205-amino-acid chain: Dephospho-CoA kinase (205 aa).

The 200-residue stretch at 6 to 205 (RIGLTGGIAA…EIYAGWCAGR (200 aa)) folds into the DPCK domain. An ATP-binding site is contributed by 14–19 (AAGKST).

It belongs to the CoaE family.

The protein localises to the cytoplasm. The catalysed reaction is 3'-dephospho-CoA + ATP = ADP + CoA + H(+). It functions in the pathway cofactor biosynthesis; coenzyme A biosynthesis; CoA from (R)-pantothenate: step 5/5. Functionally, catalyzes the phosphorylation of the 3'-hydroxyl group of dephosphocoenzyme A to form coenzyme A. The protein is Dephospho-CoA kinase of Bifidobacterium longum (strain NCC 2705).